The chain runs to 614 residues: Aspartate--tRNA ligase (614 aa).

Glu-174 lines the L-aspartate pocket. An aspartate region spans residues 198 to 201; that stretch reads QLFK. L-aspartate is bound at residue Arg-220. ATP is bound by residues 220 to 222 and Gln-229; that span reads RDE. His-448 serves as a coordination point for L-aspartate. Glu-482 lines the ATP pocket. Arg-489 provides a ligand contact to L-aspartate. 534 to 537 lines the ATP pocket; it reads GLDR.

This sequence belongs to the class-II aminoacyl-tRNA synthetase family. Type 1 subfamily. Homodimer.

It localises to the cytoplasm. The catalysed reaction is tRNA(Asp) + L-aspartate + ATP = L-aspartyl-tRNA(Asp) + AMP + diphosphate. Functionally, catalyzes the attachment of L-aspartate to tRNA(Asp) in a two-step reaction: L-aspartate is first activated by ATP to form Asp-AMP and then transferred to the acceptor end of tRNA(Asp). The chain is Aspartate--tRNA ligase from Lactobacillus acidophilus (strain ATCC 700396 / NCK56 / N2 / NCFM).